A 387-amino-acid chain; its full sequence is MHCAILKAEAVDGARLMQIFWHDGAESLYPAVWLRDNCQCSDCYLHSAKARKLLLEALDVNIRMDDLTFDQKKVYITWPNGHYSEFEANWLKKRCFSQEARAGLQGELFLPECQYWGSELQLPTLNFEDVLNDDDHAYKWLSSLKKVGIVRLTGAADKRGEIIKLGKRIGFLYLTFYGHTWQVQDKIDANNVAYTTGKLSFHTDYPALHHPPGVQLLHCIKQTVTGGDSEIVDGFNVCQKLKEKNPQAFSILSSTFVDFTDIGVDYCDFSVQSKHKIIELDDKGQVVRINFNNATRDTVFDVPIERVQPFYAALKEFVDLMNSKEYKYTFKMNPGDVITFDNWRLLHGRRSYEAGTEISRHLEGAYADWDVVMSRLRILRQRVMNGN.

Residues Cys-38, Cys-40, Cys-43, and His-82 each contribute to the Zn(2+) site. Residues His-202, Asp-204, and His-347 each coordinate Fe cation. Ser-351 carries the post-translational modification Phosphoserine.

This sequence belongs to the gamma-BBH/TMLD family. Requires Fe(2+) as cofactor. L-ascorbate serves as cofactor. Expressed in the liver and in some extend in the testis and the epididymis.

It is found in the cytoplasm. The enzyme catalyses 4-(trimethylamino)butanoate + 2-oxoglutarate + O2 = carnitine + succinate + CO2. The protein operates within amine and polyamine biosynthesis; carnitine biosynthesis. Catalyzes the formation of L-carnitine from gamma-butyrobetaine. The sequence is that of Gamma-butyrobetaine dioxygenase (Bbox1) from Rattus norvegicus (Rat).